A 158-amino-acid chain; its full sequence is Copper transporter 2 (158 aa).

Residues 1-20 (MDHDHMHDMPPPSPSSSSMS) form a disordered region. 2 helical membrane-spanning segments follow: residues 53 to 73 (GMYA…EWLA) and 104 to 124 (YLVM…AIAG).

Belongs to the copper transporter (Ctr) (TC 1.A.56) family. SLC31A subfamily. In terms of tissue distribution, highly expressed in leaves and at lower levels in roots, stems and flowers.

The protein localises to the membrane. In terms of biological role, involved in the transport of copper. The chain is Copper transporter 2 (COPT2) from Arabidopsis thaliana (Mouse-ear cress).